The chain runs to 158 residues: C-type lectin (158 aa).

Residues 1–23 (MGHFTFISLCLMPIFLSLSGAEC) form the signal peptide. 4 disulfide bridges follow: cysteine 26–cysteine 37, cysteine 54–cysteine 154, cysteine 61–cysteine 156, and cysteine 129–cysteine 146. Residues 33–155 (RNGLCYKLFD…CESLFAFICR (123 aa)) form the C-type lectin domain. Residues asparagine 111 and asparagine 121 are each glycosylated (N-linked (GlcNAc...) asparagine). The Mannose-binding motif lies at 119–121 (EPN). Residues glutamate 127, asparagine 142, and aspartate 143 each contribute to the Ca(2+) site.

It belongs to the true venom lectin family. Homodimer; non-covalently linked. Expressed by the venom gland.

It localises to the secreted. Mannose-binding lectin which recognizes specific carbohydrate structures and agglutinates a variety of animal cells by binding to cell-surface glycoproteins and glycolipids. May be a calcium-dependent lectin. The sequence is that of C-type lectin from Micrurus corallinus (Brazilian coral snake).